The chain runs to 183 residues: ATP synthase subunit delta (183 aa).

Belongs to the ATPase delta chain family. In terms of assembly, F-type ATPases have 2 components, F(1) - the catalytic core - and F(0) - the membrane proton channel. F(1) has five subunits: alpha(3), beta(3), gamma(1), delta(1), epsilon(1). F(0) has three main subunits: a(1), b(2) and c(10-14). The alpha and beta chains form an alternating ring which encloses part of the gamma chain. F(1) is attached to F(0) by a central stalk formed by the gamma and epsilon chains, while a peripheral stalk is formed by the delta and b chains.

The protein resides in the cell inner membrane. F(1)F(0) ATP synthase produces ATP from ADP in the presence of a proton or sodium gradient. F-type ATPases consist of two structural domains, F(1) containing the extramembraneous catalytic core and F(0) containing the membrane proton channel, linked together by a central stalk and a peripheral stalk. During catalysis, ATP synthesis in the catalytic domain of F(1) is coupled via a rotary mechanism of the central stalk subunits to proton translocation. Its function is as follows. This protein is part of the stalk that links CF(0) to CF(1). It either transmits conformational changes from CF(0) to CF(1) or is implicated in proton conduction. The protein is ATP synthase subunit delta of Desulfatibacillum aliphaticivorans.